The following is a 69-amino-acid chain: Ribosome modulation factor (69 aa).

The protein belongs to the ribosome modulation factor family.

Its subcellular location is the cytoplasm. Functionally, during stationary phase, converts 70S ribosomes to an inactive dimeric form (100S ribosomes). This chain is Ribosome modulation factor, found in Marinomonas mediterranea (strain ATCC 700492 / JCM 21426 / NBRC 103028 / MMB-1).